A 323-amino-acid chain; its full sequence is Peroxisomal targeting signal 2 receptor (323 aa).

WD repeat units lie at residues 65–96 (DWNDGLFDVTWSENNEHVLITCSGDGSLQLWD), 109–141 (EHAQEVYSVDWSQTRGEQLVVSGSWDQTVKLWD), 153–184 (GHESIIYSTIWSPHIPGCFASASGDQTLRIWD), 196–227 (AHQAEILSCDWCKYNENLLVTGAVDCSLRGWD), 240–271 (GHTYAIRRVKFSPFHASVLASCSYDFTVRFWN), and 284–315 (HHTEFTCGLDFSLQSPTQVADCSWDETIKIYD).

This sequence belongs to the WD repeat peroxin-7 family. In terms of assembly, interacts with PEX5; interaction only takes place when PEX7 is associated with cargo proteins. Interacts with VWA8. In terms of tissue distribution, ubiquitous. Highest expression in pancreas, skeletal muscle and heart.

The protein resides in the cytoplasm. It is found in the cytosol. Its subcellular location is the peroxisome matrix. Receptor required for the peroxisomal import of proteins containing a C-terminal PTS2-type peroxisomal targeting signal. Specifically binds to cargo proteins containing a PTS2 peroxisomal targeting signal in the cytosol. Cargo protein-binding triggers interaction with PEX5 and formation of a ternary complex composed of PEX5 and PEX7 along with PTS2-containing cargo proteins, which is tranlocated into peroxisomes by passing through the PEX13-PEX14 docking complex. The protein is Peroxisomal targeting signal 2 receptor of Homo sapiens (Human).